A 947-amino-acid polypeptide reads, in one-letter code: Serine-aspartate repeat-containing protein C (947 aa).

An N-terminal signal peptide occupies residues 1-50; the sequence is MNNKKTATNRKGMIPNRLNKFSIRKYSVGTASILVGTTLIFGLSGHEAKA. The segment at 51-164 is disordered; the sequence is AEHTNGELNQ…STTPKTTTIK (114 aa). Residues 51-495 form a ligand binding A region region; sequence AEHTNGELNQ…GSSTANGDQK (445 aa). A compositionally biased stretch (polar residues) spans 56–71; the sequence is GELNQSKNETTAPSEN. Positions 72-83 are enriched in basic and acidic residues; it reads KTTKKVDSRQLK. The segment covering 84–155 has biased composition (polar residues); it reads DNTQTATADQ…SNLTQAKDVS (72 aa). 2 consecutive CNA-B domains span residues 496-606 and 607-717; these read KYNL…YKTP and KYSL…EEET. The segment at 678-927 is disordered; sequence TQTGTNTTED…NNSNNGTLFG (250 aa). Acidic residues-rich tracts occupy residues 685–695 and 712–886; these read TEDDKDADGGE and YYEE…DSDS. The LPXTG sorting signal signature appears at 910-914; it reads LPETG. Over residues 912–927 the composition is skewed to low complexity; that stretch reads ETGSENNNSNNGTLFG. At threonine 913 the chain carries Pentaglycyl murein peptidoglycan amidated threonine. The propeptide at 914–947 is removed by sortase; sequence GSENNNSNNGTLFGGLFAALGSLLLFGRRKKQNK.

It belongs to the serine-aspartate repeat-containing protein (SDr) family. As to quaternary structure, homodimerizes; via N2-Domain. Interacts with host NRXN1; this interaction mediates bacterial attachment to host cells.

The protein localises to the secreted. The protein resides in the cell wall. Its function is as follows. Cell surface-associated calcium-binding protein which plays an important role in adhesion and pathogenesis. Mediates interactions with components of the extracellular matrix such as host NRXN1 to promote bacterial adhesion. In Staphylococcus aureus (strain COL), this protein is Serine-aspartate repeat-containing protein C (sdrC).